Here is an 877-residue protein sequence, read N- to C-terminus: Alanine--tRNA ligase (877 aa).

Zn(2+)-binding residues include His567, His571, Cys669, and His673.

This sequence belongs to the class-II aminoacyl-tRNA synthetase family. It depends on Zn(2+) as a cofactor.

Its subcellular location is the cytoplasm. The catalysed reaction is tRNA(Ala) + L-alanine + ATP = L-alanyl-tRNA(Ala) + AMP + diphosphate. Catalyzes the attachment of alanine to tRNA(Ala) in a two-step reaction: alanine is first activated by ATP to form Ala-AMP and then transferred to the acceptor end of tRNA(Ala). Also edits incorrectly charged Ser-tRNA(Ala) and Gly-tRNA(Ala) via its editing domain. The polypeptide is Alanine--tRNA ligase (Rickettsia prowazekii (strain Madrid E)).